The sequence spans 445 residues: Argininosuccinate synthase (445 aa).

ATP contacts are provided by residues 17 to 25 (AFSGGLDTS) and A43. Y99 is a binding site for L-citrulline. ATP-binding residues include G129 and T131. Positions 131, 135, and 136 each coordinate L-aspartate. An L-citrulline-binding site is contributed by N135. D136 is a binding site for ATP. R139 and S192 together coordinate L-citrulline. D194 is a binding site for ATP. L-citrulline is bound by residues T201, E203, and E280.

This sequence belongs to the argininosuccinate synthase family. Type 2 subfamily. In terms of assembly, homotetramer.

It localises to the cytoplasm. It catalyses the reaction L-citrulline + L-aspartate + ATP = 2-(N(omega)-L-arginino)succinate + AMP + diphosphate + H(+). Its pathway is amino-acid biosynthesis; L-arginine biosynthesis; L-arginine from L-ornithine and carbamoyl phosphate: step 2/3. This Burkholderia ambifaria (strain MC40-6) protein is Argininosuccinate synthase.